We begin with the raw amino-acid sequence, 363 residues long: Chorismate synthase (363 aa).

NADP(+) contacts are provided by Arg48 and Arg54. FMN is bound by residues 125-127 (RSS), 238-239 (NA), Gly278, 293-297 (KPTSS), and Arg319.

It belongs to the chorismate synthase family. Homotetramer. Requires FMNH2 as cofactor.

The catalysed reaction is 5-O-(1-carboxyvinyl)-3-phosphoshikimate = chorismate + phosphate. It participates in metabolic intermediate biosynthesis; chorismate biosynthesis; chorismate from D-erythrose 4-phosphate and phosphoenolpyruvate: step 7/7. Functionally, catalyzes the anti-1,4-elimination of the C-3 phosphate and the C-6 proR hydrogen from 5-enolpyruvylshikimate-3-phosphate (EPSP) to yield chorismate, which is the branch point compound that serves as the starting substrate for the three terminal pathways of aromatic amino acid biosynthesis. This reaction introduces a second double bond into the aromatic ring system. This chain is Chorismate synthase, found in Acidithiobacillus ferrooxidans (strain ATCC 23270 / DSM 14882 / CIP 104768 / NCIMB 8455) (Ferrobacillus ferrooxidans (strain ATCC 23270)).